Consider the following 231-residue polypeptide: Probable glutathione S-transferase GSTU1 (231 aa).

Residues 5–84 (KELVLLDFWV…YLDDAFPGTP (80 aa)) form the GST N-terminal domain. Residues Ser-15, Lys-42, Ile-56, and 68-69 (ES) each bind glutathione. Positions 97-220 (AAYARATARF…LPSPEKVYDF (124 aa)) constitute a GST C-terminal domain.

It belongs to the GST superfamily. Tau family.

It catalyses the reaction RX + glutathione = an S-substituted glutathione + a halide anion + H(+). In terms of biological role, conjugation of reduced glutathione to a wide number of exogenous and endogenous hydrophobic electrophiles. This Oryza sativa subsp. indica (Rice) protein is Probable glutathione S-transferase GSTU1 (GSTU1).